Here is a 474-residue protein sequence, read N- to C-terminus: Aspartyl/glutamyl-tRNA(Asn/Gln) amidotransferase subunit B (474 aa).

This sequence belongs to the GatB/GatE family. GatB subfamily. As to quaternary structure, heterotrimer of A, B and C subunits.

It catalyses the reaction L-glutamyl-tRNA(Gln) + L-glutamine + ATP + H2O = L-glutaminyl-tRNA(Gln) + L-glutamate + ADP + phosphate + H(+). It carries out the reaction L-aspartyl-tRNA(Asn) + L-glutamine + ATP + H2O = L-asparaginyl-tRNA(Asn) + L-glutamate + ADP + phosphate + 2 H(+). Its function is as follows. Allows the formation of correctly charged Asn-tRNA(Asn) or Gln-tRNA(Gln) through the transamidation of misacylated Asp-tRNA(Asn) or Glu-tRNA(Gln) in organisms which lack either or both of asparaginyl-tRNA or glutaminyl-tRNA synthetases. The reaction takes place in the presence of glutamine and ATP through an activated phospho-Asp-tRNA(Asn) or phospho-Glu-tRNA(Gln). The polypeptide is Aspartyl/glutamyl-tRNA(Asn/Gln) amidotransferase subunit B (Lactiplantibacillus plantarum (strain ATCC BAA-793 / NCIMB 8826 / WCFS1) (Lactobacillus plantarum)).